The sequence spans 38 residues: Exendin-1 (38 aa).

O-linked (HexNAc...) serine; in Exendin-1 and Exendin-1b glycosylation occurs at Ser-32.

Belongs to the glucagon family. Post-translationally, O-linked glycan consists of Hex-HexNAc saccharide. Glycosylation may be of interest for the biological stability of exendin-1 and exendin-1b. In terms of tissue distribution, expressed by the venom gland.

Its subcellular location is the secreted. In terms of biological role, O-linked and free exendin-1 and exendin-1b have vasoactive intestinal peptide(VIP)/secretin-like biological activities. They interact with rat and human VIP receptors 1 (VIPR1) and 2 (VIPR2), with the highest affinity for the human VIPR2. They induce hypotension that is mediated by relaxation of cardiac smooth muscle. The chain is Exendin-1 from Heloderma horridum horridum (Mexican beaded lizard).